Here is a 432-residue protein sequence, read N- to C-terminus: Pentatricopeptide repeat-containing protein 2, mitochondrial (432 aa).

The N-terminal 33 residues, 1–33, are a transit peptide targeting the mitochondrion; the sequence is MQFIKRTFPRRAFVDLLLNRFCLREFATTYSVS. PPR repeat units follow at residues 108–142, 143–179, 360–394, and 395–429; these read KTVAYNLVLQYHLAKGHYNAAWSLYNDMKKRQQKP, SDHTYSILLKGFCDAIEKNKQGNFSKLREYSEKVTAS, NLQVYHEKLRNLVQQGQAAECLNTIKRMSHNGPFP, and TQQTFLIVLSLCKRPKFYSYTKSFLDLAKKLNVPV.

It localises to the mitochondrion. Mitochondrial RNA-binding protein that acts as a general translation factor. Plays a critical role in the synthesis of all mitochondrial DNA-encoded oxidative phosphorylation subunits, which are essential for mitochondrial respiration. Essential for the expression of iron-sulfur cluster (ISC) proteins as well as other heme proteins related to iron-sensing, and thus plays a key role in iron homeostasis. In Schizosaccharomyces pombe (strain 972 / ATCC 24843) (Fission yeast), this protein is Pentatricopeptide repeat-containing protein 2, mitochondrial.